The chain runs to 588 residues: Sentrin-specific protease 2 (588 aa).

The Nuclear localization signal motif lies at 28 to 31 (KRRR). Ser32 bears the Phosphoserine mark. The Nuclear localization signal motif lies at 47–52 (PAKRPR). The axin-binding stretch occupies residues 72-381 (GFPFQLTTKP…EKEISNALGH (310 aa)). Positions 157–184 (EGYNRRPSGRRHSKSNPESSLPWKPQEQ) are disordered. Residues 316-331 (LEPDLSEEVSARLRLG) carry the Nuclear export signal motif. Phosphoserine occurs at positions 332 and 343. The interval 394–558 (LRITRGDIQT…MFTCKYADYI (165 aa)) is protease. Catalysis depends on residues His477 and Asp494. The Nucleophile role is filled by Cys547.

Belongs to the peptidase C48 family. Binds to SUMO2 and SUMO3. Interacts with the C-terminal domain of NUP153 via its N-terminus. Interacts with MTA1. Binds to AXIN1. Post-translationally, polyubiquitinated; which leads to proteasomal degradation. As to expression, ubiquitous. Highly expressed in brain, lung and testis.

Its subcellular location is the nucleus. The protein resides in the nuclear pore complex. It is found in the nucleus membrane. It localises to the cytoplasm. In terms of biological role, protease that catalyzes two essential functions in the SUMO pathway. The first is the hydrolysis of an alpha-linked peptide bond at the C-terminal end of the small ubiquitin-like modifier (SUMO) propeptides, SUMO1, SUMO2 and SUMO3 leading to the mature form of the proteins. The second is the deconjugation of SUMO1, SUMO2 and SUMO3 from targeted proteins, by cleaving an epsilon-linked peptide bond between the C-terminal glycine of the mature SUMO and the lysine epsilon-amino group of the target protein. May down-regulate CTNNB1 levels and thereby modulate the Wnt pathway. Deconjugates SUMO2 from MTA1. Plays a dynamic role in adipogenesis by desumoylating and promoting the stabilization of CEBPB. Acts as a regulator of the cGAS-STING pathway by catalyzing desumoylation of CGAS and STING1 during the late phase of viral infection. The sequence is that of Sentrin-specific protease 2 (Senp2) from Rattus norvegicus (Rat).